A 156-amino-acid chain; its full sequence is 6,7-dimethyl-8-ribityllumazine synthase (156 aa).

5-amino-6-(D-ribitylamino)uracil contacts are provided by residues phenylalanine 22, 57–59 (AYE), and 81–83 (TVI). 86–87 (GT) contacts (2S)-2-hydroxy-3-oxobutyl phosphate. Histidine 89 functions as the Proton donor in the catalytic mechanism. Phenylalanine 114 contributes to the 5-amino-6-(D-ribitylamino)uracil binding site. Arginine 128 lines the (2S)-2-hydroxy-3-oxobutyl phosphate pocket.

It belongs to the DMRL synthase family. Forms an icosahedral capsid composed of 60 subunits, arranged as a dodecamer of pentamers.

It catalyses the reaction (2S)-2-hydroxy-3-oxobutyl phosphate + 5-amino-6-(D-ribitylamino)uracil = 6,7-dimethyl-8-(1-D-ribityl)lumazine + phosphate + 2 H2O + H(+). Its pathway is cofactor biosynthesis; riboflavin biosynthesis; riboflavin from 2-hydroxy-3-oxobutyl phosphate and 5-amino-6-(D-ribitylamino)uracil: step 1/2. In terms of biological role, catalyzes the formation of 6,7-dimethyl-8-ribityllumazine by condensation of 5-amino-6-(D-ribitylamino)uracil with 3,4-dihydroxy-2-butanone 4-phosphate. This is the penultimate step in the biosynthesis of riboflavin. The chain is 6,7-dimethyl-8-ribityllumazine synthase from Salmonella agona (strain SL483).